The sequence spans 28 residues: Phospholipase A2 3 (28 aa).

This sequence belongs to the phospholipase A2 family. Group I subfamily. Ca(2+) serves as cofactor. Expressed by the venom gland.

The protein localises to the secreted. The catalysed reaction is a 1,2-diacyl-sn-glycero-3-phosphocholine + H2O = a 1-acyl-sn-glycero-3-phosphocholine + a fatty acid + H(+). Snake venom phospholipase A2 (PLA2) that inhibits neuromuscular transmission by blocking acetylcholine release from the nerve termini. PLA2 catalyzes the calcium-dependent hydrolysis of the 2-acyl groups in 3-sn-phosphoglycerides. This Micrurus nigrocinctus (Central American coral snake) protein is Phospholipase A2 3.